The sequence spans 393 residues: Acetyl-CoA acetyltransferase (393 aa).

Cys90 serves as the catalytic Acyl-thioester intermediate. Catalysis depends on proton acceptor residues His349 and Cys379.

This sequence belongs to the thiolase-like superfamily. Thiolase family. In terms of assembly, homotetramer.

The protein resides in the cytoplasm. It carries out the reaction 2 acetyl-CoA = acetoacetyl-CoA + CoA. It participates in biopolymer metabolism; poly-(R)-3-hydroxybutanoate biosynthesis. It functions in the pathway metabolic intermediate biosynthesis; (R)-mevalonate biosynthesis; (R)-mevalonate from acetyl-CoA: step 1/3. This chain is Acetyl-CoA acetyltransferase, found in Rhizobium meliloti (strain 1021) (Ensifer meliloti).